Here is an 860-residue protein sequence, read N- to C-terminus: Protein translocase subunit SecA (860 aa).

ATP contacts are provided by residues Gln87, 105–109, and Asp514; that span reads GEGKT. Positions 846, 848, 857, and 858 each coordinate Zn(2+).

The protein belongs to the SecA family. Monomer and homodimer. Part of the essential Sec protein translocation apparatus which comprises SecA, SecYEG and auxiliary proteins SecDF. Other proteins may also be involved. Zn(2+) is required as a cofactor.

Its subcellular location is the cell membrane. It is found in the cytoplasm. The enzyme catalyses ATP + H2O + cellular proteinSide 1 = ADP + phosphate + cellular proteinSide 2.. In terms of biological role, part of the Sec protein translocase complex. Interacts with the SecYEG preprotein conducting channel. Has a central role in coupling the hydrolysis of ATP to the transfer of proteins into and across the cell membrane, serving as an ATP-driven molecular motor driving the stepwise translocation of polypeptide chains across the membrane. The protein is Protein translocase subunit SecA of Endomicrobium trichonymphae.